Consider the following 239-residue polypeptide: Probable 2-phosphosulfolactate phosphatase (239 aa).

Belongs to the ComB family. The cofactor is Mg(2+).

The enzyme catalyses (2R)-O-phospho-3-sulfolactate + H2O = (2R)-3-sulfolactate + phosphate. The sequence is that of Probable 2-phosphosulfolactate phosphatase from Clostridium botulinum (strain Kyoto / Type A2).